Here is a 117-residue protein sequence, read N- to C-terminus: Large ribosomal subunit protein bL20 (117 aa).

Belongs to the bacterial ribosomal protein bL20 family.

Functionally, binds directly to 23S ribosomal RNA and is necessary for the in vitro assembly process of the 50S ribosomal subunit. It is not involved in the protein synthesizing functions of that subunit. The chain is Large ribosomal subunit protein bL20 from Pelotomaculum thermopropionicum (strain DSM 13744 / JCM 10971 / SI).